The primary structure comprises 116 residues: Type IV narrow pilus major component PilA5 (116 aa).

A propeptide spans 1–5 (leader sequence); sequence MRAKG. At Phe-6 the chain carries N-methylphenylalanine. A helical membrane pass occupies residues 6-26; it reads FTLIELAIVIVIIGILVAIAV.

In terms of processing, glycosylated.

It localises to the cell inner membrane. Its subcellular location is the cell outer membrane. It is found in the periplasm. Functionally, plays an essential role in forming the main structure of the narrow T4P pili that participates in twitching motility. The polypeptide is Type IV narrow pilus major component PilA5 (pilA5) (Thermus thermophilus (strain ATCC BAA-163 / DSM 7039 / HB27)).